Reading from the N-terminus, the 523-residue chain is Tyrosine ammonia-lyase (523 aa).

Tyr60 functions as the Proton donor/acceptor in the catalytic mechanism. His89 contributes to the substrate binding site. Residues 149 to 151 (ASG) constitute a cross-link (5-imidazolinone (Ala-Gly)). Ser150 is subject to 2,3-didehydroalanine (Ser). Residues Arg303 and 432–436 (NAANQ) contribute to the substrate site.

The protein belongs to the PAL/histidase family. In terms of assembly, homotetramer. Contains an active site 4-methylidene-imidazol-5-one (MIO), which is formed autocatalytically by cyclization and dehydration of residues Ala-Ser-Gly.

The catalysed reaction is L-tyrosine = (E)-4-coumarate + NH4(+). Its function is as follows. Catalyzes the non-oxidative deamination of L-tyrosine. Has very low phenylalanine ammonia-lyase activity (in vitro). The sequence is that of Tyrosine ammonia-lyase (hutH) from Cereibacter sphaeroides (strain ATCC 17023 / DSM 158 / JCM 6121 / CCUG 31486 / LMG 2827 / NBRC 12203 / NCIMB 8253 / ATH 2.4.1.) (Rhodobacter sphaeroides).